The chain runs to 658 residues: Protein cueball (658 aa).

Over 1–543 (MSGVTARMEN…SYCKNSFNRT (543 aa)) the chain is Extracellular. 2 N-linked (GlcNAc...) asparagine glycosylation sites follow: Asn-25 and Asn-122. 3 LDL-receptor class B repeats span residues 100–142 (RKLY…NHDL), 152–195 (RHLY…DHYS), and 196–241 (NRIY…NSRY). EGF-like domains follow at residues 352–384 (EIPI…FEGE), 387–422 (DRSK…KRCE), and 458–495 (EEYT…KRCE). 8 cysteine pairs are disulfide-bonded: Cys-356–Cys-365, Cys-360–Cys-375, Cys-391–Cys-401, Cys-395–Cys-410, Cys-412–Cys-421, Cys-462–Cys-472, Cys-466–Cys-483, and Cys-485–Cys-494. N-linked (GlcNAc...) asparagine glycans are attached at residues Asn-400 and Asn-415. Asn-476 carries N-linked (GlcNAc...) asparagine glycosylation. The N-linked (GlcNAc...) asparagine glycan is linked to Asn-541. A helical transmembrane segment spans residues 544-564 (VVYASLAFAASLFILMVILLI). Over 565-658 (VRRFYEEGRP…SCAGGDKNLP (94 aa)) the chain is Cytoplasmic.

It belongs to the cueball family.

The protein localises to the cell membrane. Functionally, has a role in spermatogenesis and oogenesis. In Culex quinquefasciatus (Southern house mosquito), this protein is Protein cueball.